The primary structure comprises 490 residues: Betaine aldehyde dehydrogenase (490 aa).

A K(+)-binding site is contributed by aspartate 93. 150–152 (GAW) contacts NAD(+). Residue lysine 162 is the Charge relay system of the active site. 176–179 (KPSE) lines the NAD(+) pocket. Residue valine 180 coordinates K(+). Residue 230–233 (GIAS) participates in NAD(+) binding. A K(+)-binding site is contributed by leucine 246. The active-site Proton acceptor is the glutamate 252. NAD(+) contacts are provided by glycine 254, cysteine 286, and glutamate 387. Cysteine 286 functions as the Nucleophile in the catalytic mechanism. Cysteine 286 is subject to Cysteine sulfenic acid (-SOH). The K(+) site is built by lysine 457 and glycine 460. Glutamate 464 acts as the Charge relay system in catalysis.

This sequence belongs to the aldehyde dehydrogenase family. In terms of assembly, dimer of dimers. The cofactor is K(+).

The catalysed reaction is betaine aldehyde + NAD(+) + H2O = glycine betaine + NADH + 2 H(+). The protein operates within amine and polyamine biosynthesis; betaine biosynthesis via choline pathway; betaine from betaine aldehyde: step 1/1. Functionally, involved in the biosynthesis of the osmoprotectant glycine betaine. Catalyzes the irreversible oxidation of betaine aldehyde to the corresponding acid. This Pectobacterium carotovorum subsp. carotovorum (strain PC1) protein is Betaine aldehyde dehydrogenase.